The chain runs to 100 residues: Aspartyl/glutamyl-tRNA(Asn/Gln) amidotransferase subunit C (100 aa).

This sequence belongs to the GatC family. In terms of assembly, heterotrimer of A, B and C subunits.

The enzyme catalyses L-glutamyl-tRNA(Gln) + L-glutamine + ATP + H2O = L-glutaminyl-tRNA(Gln) + L-glutamate + ADP + phosphate + H(+). It catalyses the reaction L-aspartyl-tRNA(Asn) + L-glutamine + ATP + H2O = L-asparaginyl-tRNA(Asn) + L-glutamate + ADP + phosphate + 2 H(+). In terms of biological role, allows the formation of correctly charged Asn-tRNA(Asn) or Gln-tRNA(Gln) through the transamidation of misacylated Asp-tRNA(Asn) or Glu-tRNA(Gln) in organisms which lack either or both of asparaginyl-tRNA or glutaminyl-tRNA synthetases. The reaction takes place in the presence of glutamine and ATP through an activated phospho-Asp-tRNA(Asn) or phospho-Glu-tRNA(Gln). The polypeptide is Aspartyl/glutamyl-tRNA(Asn/Gln) amidotransferase subunit C (Rickettsia africae (strain ESF-5)).